The sequence spans 170 residues: Calcineurin subunit B type 1 (170 aa).

Residue Gly2 is the site of N-myristoyl glycine attachment. 4 EF-hand domains span residues 18–46, 50–85, 87–122, and 128–163; these read DEIKRLGKRFKKLDLDNSGSLSVEEFMSL, QQNPLVQRVIDIFDTDGNGEVDFKEFIEGVSQFSVK, DKEQKLRFAFRIYDMDKDGYISNGELFQVLKMMVGN, and QLQQIVDKTIINADKDGDGRISFEEFCAVVGGLDIH. Residues Asp31, Asp33, Ser35, Ser37, Glu42, Asp63, Asp65, Asn67, Glu69, Glu74, Asp100, Asp102, Asp104, Tyr106, and Glu111 each contribute to the Ca(2+) site. Residue Tyr106 is modified to Phosphotyrosine. Residues 131-136 are calcineurin A binding; that stretch reads QIVDKT. Ca(2+)-binding residues include Asp141, Asp143, Asp145, Arg147, and Glu152.

The protein belongs to the calcineurin regulatory subunit family. Forms a complex composed of a calmodulin-dependent catalytic subunit (also known as calcineurin A) and a regulatory Ca(2+)-binding subunit (also known as calcineurin B). There are three catalytic subunits, each encoded by a separate gene (PPP3CA, PPP3CB, and PPP3CC) and two regulatory subunits which are also encoded by separate genes (PPP3R1 and PPP3R2). The interaction between the 2 subunits is Ca(2+)-independent. Interacts with catalytic subunit PPP3CA/calcineurin A. Interacts with catalytic subunit PPP3CB/calcineurin A. Interacts with CIB1 (via C-terminal region); the interaction increases upon cardiomyocyte hypertrophy. Interacts with RCAN1. Interacts with SPATA33 (via PQIIIT motif).

It is found in the cytoplasm. Its subcellular location is the cytosol. The protein localises to the cell membrane. The protein resides in the sarcolemma. In terms of biological role, regulatory subunit of calcineurin, a calcium-dependent, calmodulin stimulated protein phosphatase. Confers calcium sensitivity. The polypeptide is Calcineurin subunit B type 1 (PPP3R1) (Bos taurus (Bovine)).